The primary structure comprises 328 residues: Pyruvate dehydrogenase E1 component subunit beta (328 aa).

Residue Glu-60 participates in thiamine diphosphate binding. Ile-113, Ile-162, and Asn-166 together coordinate K(+).

In terms of assembly, heterodimer of an alpha and a beta chain. It depends on thiamine diphosphate as a cofactor.

The protein localises to the plastid. The protein resides in the chloroplast. The enzyme catalyses N(6)-[(R)-lipoyl]-L-lysyl-[protein] + pyruvate + H(+) = N(6)-[(R)-S(8)-acetyldihydrolipoyl]-L-lysyl-[protein] + CO2. In terms of biological role, the pyruvate dehydrogenase complex catalyzes the overall conversion of pyruvate to acetyl-CoA and CO(2). It contains multiple copies of three enzymatic components: pyruvate dehydrogenase (E1), dihydrolipoamide acetyltransferase (E2) and lipoamide dehydrogenase (E3). The sequence is that of Pyruvate dehydrogenase E1 component subunit beta (pdhB) from Staurastrum punctulatum (Green alga).